Reading from the N-terminus, the 256-residue chain is Triosephosphate isomerase (256 aa).

9–11 (NWK) is a substrate binding site. His97 acts as the Electrophile in catalysis. Glu169 (proton acceptor) is an active-site residue. Substrate contacts are provided by residues Gly175, Ser214, and 235-236 (GG).

The protein belongs to the triosephosphate isomerase family. As to quaternary structure, homodimer.

The protein resides in the cytoplasm. The enzyme catalyses D-glyceraldehyde 3-phosphate = dihydroxyacetone phosphate. It participates in carbohydrate biosynthesis; gluconeogenesis. Its pathway is carbohydrate degradation; glycolysis; D-glyceraldehyde 3-phosphate from glycerone phosphate: step 1/1. In terms of biological role, involved in the gluconeogenesis. Catalyzes stereospecifically the conversion of dihydroxyacetone phosphate (DHAP) to D-glyceraldehyde-3-phosphate (G3P). This Aliivibrio fischeri (strain ATCC 700601 / ES114) (Vibrio fischeri) protein is Triosephosphate isomerase.